Consider the following 266-residue polypeptide: Phosphatidylserine decarboxylase proenzyme (266 aa).

Catalysis depends on charge relay system; for autoendoproteolytic cleavage activity residues aspartate 74, histidine 135, and serine 237. Serine 237 (schiff-base intermediate with substrate; via pyruvic acid; for decarboxylase activity) is an active-site residue. Serine 237 bears the Pyruvic acid (Ser); by autocatalysis mark.

Belongs to the phosphatidylserine decarboxylase family. PSD-B subfamily. Prokaryotic type I sub-subfamily. Heterodimer of a large membrane-associated beta subunit and a small pyruvoyl-containing alpha subunit. The cofactor is pyruvate. In terms of processing, is synthesized initially as an inactive proenzyme. Formation of the active enzyme involves a self-maturation process in which the active site pyruvoyl group is generated from an internal serine residue via an autocatalytic post-translational modification. Two non-identical subunits are generated from the proenzyme in this reaction, and the pyruvate is formed at the N-terminus of the alpha chain, which is derived from the carboxyl end of the proenzyme. The autoendoproteolytic cleavage occurs by a canonical serine protease mechanism, in which the side chain hydroxyl group of the serine supplies its oxygen atom to form the C-terminus of the beta chain, while the remainder of the serine residue undergoes an oxidative deamination to produce ammonia and the pyruvoyl prosthetic group on the alpha chain. During this reaction, the Ser that is part of the protease active site of the proenzyme becomes the pyruvoyl prosthetic group, which constitutes an essential element of the active site of the mature decarboxylase.

The protein resides in the cell membrane. It carries out the reaction a 1,2-diacyl-sn-glycero-3-phospho-L-serine + H(+) = a 1,2-diacyl-sn-glycero-3-phosphoethanolamine + CO2. Its pathway is phospholipid metabolism; phosphatidylethanolamine biosynthesis; phosphatidylethanolamine from CDP-diacylglycerol: step 2/2. Functionally, catalyzes the formation of phosphatidylethanolamine (PtdEtn) from phosphatidylserine (PtdSer). The protein is Phosphatidylserine decarboxylase proenzyme of Campylobacter jejuni subsp. jejuni serotype O:2 (strain ATCC 700819 / NCTC 11168).